Reading from the N-terminus, the 296-residue chain is uncharacterized protein (296 aa).

This is an uncharacterized protein from Magallana gigas (Pacific oyster).